We begin with the raw amino-acid sequence, 120 residues long: NAD(P)H-quinone oxidoreductase subunit 3 (120 aa).

A run of 3 helical transmembrane segments spans residues 6–26 (GYDAFLGFLLIAAAVPVLALV), 64–84 (MFALVFVIFDVETVFLYPWAV), and 89–109 (LGLLAFIEALIFIAILLVALA).

This sequence belongs to the complex I subunit 3 family. In terms of assembly, NDH-1 can be composed of about 15 different subunits; different subcomplexes with different compositions have been identified which probably have different functions.

Its subcellular location is the cellular thylakoid membrane. It catalyses the reaction a plastoquinone + NADH + (n+1) H(+)(in) = a plastoquinol + NAD(+) + n H(+)(out). It carries out the reaction a plastoquinone + NADPH + (n+1) H(+)(in) = a plastoquinol + NADP(+) + n H(+)(out). Functionally, NDH-1 shuttles electrons from an unknown electron donor, via FMN and iron-sulfur (Fe-S) centers, to quinones in the respiratory and/or the photosynthetic chain. The immediate electron acceptor for the enzyme in this species is believed to be plastoquinone. Couples the redox reaction to proton translocation, and thus conserves the redox energy in a proton gradient. Cyanobacterial NDH-1 also plays a role in inorganic carbon-concentration. In Synechococcus sp. (strain CC9902), this protein is NAD(P)H-quinone oxidoreductase subunit 3.